The primary structure comprises 218 residues: Adenylate kinase (218 aa).

10–15 (GAGKGT) contacts ATP. The NMP stretch occupies residues 30–59 (STGDMLRAAVKEGSELGLKVKEIMNSGGLV). AMP-binding positions include T31, R36, 57–59 (GLV), 85–88 (GFPR), and Q92. The interval 122–159 (GRRVHPGSGRVYHVDYNPPKEEGKDDVTGEALIQRDDD) is LID. ATP-binding positions include R123 and 132 to 133 (VY). Positions 156 and 167 each coordinate AMP. G203 contributes to the ATP binding site.

This sequence belongs to the adenylate kinase family. As to quaternary structure, monomer.

The protein localises to the cytoplasm. The enzyme catalyses AMP + ATP = 2 ADP. It functions in the pathway purine metabolism; AMP biosynthesis via salvage pathway; AMP from ADP: step 1/1. Its function is as follows. Catalyzes the reversible transfer of the terminal phosphate group between ATP and AMP. Plays an important role in cellular energy homeostasis and in adenine nucleotide metabolism. The chain is Adenylate kinase from Chromohalobacter salexigens (strain ATCC BAA-138 / DSM 3043 / CIP 106854 / NCIMB 13768 / 1H11).